The primary structure comprises 654 residues: Endoplasmic reticulum chaperone BiP (654 aa).

A signal peptide spans 1 to 18 (MKLSLVAAMLLLLSAARA). The segment at 1–80 (MKLSLVAAML…EGERLIGDAA (80 aa)) is required for interaction with ELAPOR1. 36 to 39 (GTTY) is a binding site for ATP. Residue Ser-86 is modified to Phosphoserine. Position 96 (Lys-96) interacts with ATP. N6-acetyllysine is present on Lys-125. The interval 125-280 (KPYIQVDIGG…KKKTGKDVRK (156 aa)) is nucleotide-binding (NBD). Tyr-160 carries the post-translational modification 3'-nitrotyrosine. N6-acetyllysine is present on Lys-213. 227-229 (GGT) is a binding site for ATP. Residue Lys-271 is modified to N6-acetyllysine. Position 293 to 300 (293 to 300 (EKAKRALS)) interacts with ATP. N6-acetyllysine is present on Lys-326. Lys-352 is covalently cross-linked (Glycyl lysine isopeptide (Lys-Gly) (interchain with G-Cter in SUMO2)). Lys-353 bears the N6-acetyllysine; alternate mark. Lys-353 participates in a covalent cross-link: Glycyl lysine isopeptide (Lys-Gly) (interchain with G-Cter in SUMO1); alternate. Residue 364-367 (GSTR) coordinates ATP. The interdomain linker stretch occupies residues 409–419 (QDTGDLALLDV). Positions 420–500 (CPLTLGIETV…PRGVPQIEVT (81 aa)) are substrate-binding (SBD). At Lys-447 the chain carries N6-succinyllysine. An Omega-N-methylarginine modification is found at Arg-492. The residue at position 518 (Thr-518) is an O-AMP-threonine; alternate. Thr-518 carries the post-translational modification Phosphothreonine; alternate. N6,N6,N6-trimethyllysine; by METTL21A; in vitro is present on Lys-585. Position 585 is an N6,N6-dimethyllysine; alternate (Lys-585). N6-methyllysine; alternate is present on Lys-585. At Lys-591 the chain carries N6-methyllysine. Residues 633–654 (KLYGSAGPPPTGEEDTAEKDEL) are disordered. 2 positions are modified to phosphothreonine: Thr-643 and Thr-648. A compositionally biased stretch (acidic residues) spans 644-654 (GEEDTAEKDEL). The Prevents secretion from ER motif lies at 651–654 (KDEL).

Belongs to the heat shock protein 70 family. In terms of assembly, monomer and homooligomer; homooligomerization via the interdomain linker inactivates the chaperone activity and acts as a storage of HSPA5/BiP molecules. Interacts with DNAJC1 (via J domain). Component of an EIF2 complex at least composed of CELF1/CUGBP1, CALR, CALR3, EIF2S1, EIF2S2, HSP90B1 and HSPA5. Part of a large chaperone multiprotein complex comprising DNAJB11, HSP90B1, HSPA5, HYOU, PDIA2, PDIA4, PDIA6, PPIB, SDF2L1, UGGT1 and very small amounts of ERP29, but not, or at very low levels, CALR nor CANX. Interacts with TMEM132A and TRIM21. May form a complex with ERLEC1, OS9, SEL1L and SYVN1. Interacts with DNAJC10. Interacts with DNAJB9/ERdj4; leading to recruit HSPA5/BiP to ERN1/IRE1. Interacts with ERN1/IRE1 (via luminal domain); the interaction takes place following interaction with DNAJB9/ERdj4 and leads to inactivate ERN1/IRE1, the interaction also competitively inhibits ERN1 interaction with MANF. Interacts directly with MANF (via SAP domain); the interaction inhibits ATP binding to HSPA5/BiP and subsequent nucleotide exchange. Interacts with EIF2AK3/PERK (via luminal domain); interaction leads to inactivate EIF2AK3/PERK. Interacts with MX1. Interacts with METTL23. Interacts with CEMIP; the interaction induces calcium leakage from the endoplasmic reticulum and cell migration. Interacts with PCSK4 form; the interaction takes place in the endoplasmic reticulum. Interacts with CIPC. Interacts with CCDC88B (via C-terminus); the interaction opposes ERN1-mediated JNK activation, protecting against apoptosis. Interacts with INPP5K; necessary for INPP5K localization at the endoplasmic reticulum. Interacts with MANF; the interaction is direct. Interacts with LOXL2; leading to activate the ERN1/IRE1-XBP1 pathway of the unfolded protein response. Interacts with CLU under stressed condition; interaction increases CLU protein stability; facilitates its retrotranslocation and redistribution to the mitochondria; cooperatively suppress stress-induced apoptosis by stabilizing mitochondrial membrane integrity. Interacts with CCDC47. Interacts with CLN3. Interacts with ELAPOR1; may regulate the function of HSPA5 in apoptosis and cell proliferation. Interacts with CASP7. Interacts with ILDR2; the interaction stabilizes ILDR2 expression. Interacts with ADAM7. In terms of processing, in unstressed cells, AMPylation at Thr-518 by FICD inactivates the chaperome activity: AMPylated form is locked in a relatively inert state and only weakly stimulated by J domain-containing proteins. In response to endoplasmic reticulum stress, de-AMPylation by the same protein, FICD, restores the chaperone activity.

Its subcellular location is the endoplasmic reticulum lumen. It localises to the melanosome. The protein localises to the cytoplasm. The protein resides in the cell surface. It catalyses the reaction ATP + H2O = ADP + phosphate + H(+). With respect to regulation, the chaperone activity is regulated by ATP-induced allosteric coupling of the nucleotide-binding (NBD) and substrate-binding (SBD) domains. In the ADP-bound and nucleotide-free (apo) states, the two domains have little interaction. In contrast, in the ATP-bound state the two domains are tightly coupled, which results in drastically accelerated kinetics in both binding and release of polypeptide substrates. J domain-containing co-chaperones (DNAJB9/ERdj4 or DNAJC10/ERdj5) stimulate the ATPase activity and are required for efficient substrate recognition by HSPA5/BiP. Homooligomerization inactivates participating HSPA5/BiP protomers and probably act as reservoirs to store HSPA5/BiP molecules when they are not needed by the cell. Its function is as follows. Endoplasmic reticulum chaperone that plays a key role in protein folding and quality control in the endoplasmic reticulum lumen. Involved in the correct folding of proteins and degradation of misfolded proteins via its interaction with DNAJC10/ERdj5, probably to facilitate the release of DNAJC10/ERdj5 from its substrate. Acts as a key repressor of the EIF2AK3/PERK and ERN1/IRE1-mediated unfolded protein response (UPR). In the unstressed endoplasmic reticulum, recruited by DNAJB9/ERdj4 to the luminal region of ERN1/IRE1, leading to disrupt the dimerization of ERN1/IRE1, thereby inactivating ERN1/IRE1. Also binds and inactivates EIF2AK3/PERK in unstressed cells. Accumulation of misfolded protein in the endoplasmic reticulum causes release of HSPA5/BiP from ERN1/IRE1 and EIF2AK3/PERK, allowing their homodimerization and subsequent activation. Plays an auxiliary role in post-translational transport of small presecretory proteins across endoplasmic reticulum (ER). May function as an allosteric modulator for SEC61 channel-forming translocon complex, likely cooperating with SEC62 to enable the productive insertion of these precursors into SEC61 channel. Appears to specifically regulate translocation of precursors having inhibitory residues in their mature region that weaken channel gating. May also play a role in apoptosis and cell proliferation. The protein is Endoplasmic reticulum chaperone BiP of Pongo abelii (Sumatran orangutan).